The following is a 192-amino-acid chain: Pyridoxal 5'-phosphate synthase subunit PdxT (192 aa).

Residue 53–55 (GES) coordinates L-glutamine. The active-site Nucleophile is the Cys-82. L-glutamine contacts are provided by residues Arg-108 and 134-135 (IR). Active-site charge relay system residues include His-170 and Glu-172.

It belongs to the glutaminase PdxT/SNO family. In the presence of PdxS, forms a dodecamer of heterodimers. Only shows activity in the heterodimer.

It catalyses the reaction aldehydo-D-ribose 5-phosphate + D-glyceraldehyde 3-phosphate + L-glutamine = pyridoxal 5'-phosphate + L-glutamate + phosphate + 3 H2O + H(+). It carries out the reaction L-glutamine + H2O = L-glutamate + NH4(+). It participates in cofactor biosynthesis; pyridoxal 5'-phosphate biosynthesis. Catalyzes the hydrolysis of glutamine to glutamate and ammonia as part of the biosynthesis of pyridoxal 5'-phosphate. The resulting ammonia molecule is channeled to the active site of PdxS. The polypeptide is Pyridoxal 5'-phosphate synthase subunit PdxT (Methanosphaera stadtmanae (strain ATCC 43021 / DSM 3091 / JCM 11832 / MCB-3)).